The following is an 884-amino-acid chain: Valine--tRNA ligase (884 aa).

The 'HIGH' region signature appears at Pro-43–His-53. The short motif at Lys-530–Ser-534 is the 'KMSKS' region element. Lys-533 contacts ATP. Positions Val-817–Met-884 form a coiled coil.

Belongs to the class-I aminoacyl-tRNA synthetase family. ValS type 1 subfamily. As to quaternary structure, monomer.

The protein resides in the cytoplasm. The catalysed reaction is tRNA(Val) + L-valine + ATP = L-valyl-tRNA(Val) + AMP + diphosphate. Catalyzes the attachment of valine to tRNA(Val). As ValRS can inadvertently accommodate and process structurally similar amino acids such as threonine, to avoid such errors, it has a 'posttransfer' editing activity that hydrolyzes mischarged Thr-tRNA(Val) in a tRNA-dependent manner. This chain is Valine--tRNA ligase, found in Zymomonas mobilis subsp. mobilis (strain ATCC 31821 / ZM4 / CP4).